We begin with the raw amino-acid sequence, 416 residues long: Adenosylhomocysteinase (416 aa).

Substrate is bound by residues threonine 55, aspartate 126, and glutamate 151. 152-154 (TTT) lines the NAD(+) pocket. 2 residues coordinate substrate: lysine 181 and aspartate 185. Residues asparagine 186, 215 to 220 (GYGWVG), glutamate 238, asparagine 273, 294 to 296 (AGH), and asparagine 341 contribute to the NAD(+) site.

Belongs to the adenosylhomocysteinase family. NAD(+) is required as a cofactor.

It localises to the cytoplasm. It catalyses the reaction S-adenosyl-L-homocysteine + H2O = L-homocysteine + adenosine. The protein operates within amino-acid biosynthesis; L-homocysteine biosynthesis; L-homocysteine from S-adenosyl-L-homocysteine: step 1/1. Its function is as follows. May play a key role in the regulation of the intracellular concentration of adenosylhomocysteine. The polypeptide is Adenosylhomocysteinase (Aeropyrum pernix (strain ATCC 700893 / DSM 11879 / JCM 9820 / NBRC 100138 / K1)).